The primary structure comprises 511 residues: Histidine ammonia-lyase (511 aa).

The segment at residues 142–144 (ASG) is a cross-link (5-imidazolinone (Ala-Gly)). Serine 143 carries the 2,3-didehydroalanine (Ser) modification.

It belongs to the PAL/histidase family. In terms of processing, contains an active site 4-methylidene-imidazol-5-one (MIO), which is formed autocatalytically by cyclization and dehydration of residues Ala-Ser-Gly.

It is found in the cytoplasm. The catalysed reaction is L-histidine = trans-urocanate + NH4(+). It participates in amino-acid degradation; L-histidine degradation into L-glutamate; N-formimidoyl-L-glutamate from L-histidine: step 1/3. The protein is Histidine ammonia-lyase of Brucella suis (strain ATCC 23445 / NCTC 10510).